The sequence spans 501 residues: Splicing factor ESS-2 homolog (501 aa).

2 stretches are compositionally biased toward low complexity: residues 1 to 18 (MSATTRTPATPGTPGTPG) and 105 to 115 (ISGTGRSTSRR). Disordered regions lie at residues 1-20 (MSATTRTPATPGTPGTPGSL) and 105-163 (ISGT…GRDT). Residues 126–151 (TPVSQAKCSNTPLPNSRATDTPFSTD) show a composition bias toward polar residues. Residues 152 to 163 (GSEKSDAEGRDT) are compositionally biased toward basic and acidic residues. 2 positions are modified to phosphoserine: Ser409 and Ser411. A disordered region spans residues 425 to 471 (RGTPRLRHTPSPMSGRKRKVTPGVVRSTNTPILGEPKPKQQAKISTP).

The protein belongs to the ESS2 family.

Its subcellular location is the nucleus. The chain is Splicing factor ESS-2 homolog (Es2) from Drosophila melanogaster (Fruit fly).